A 391-amino-acid polypeptide reads, in one-letter code: Autotransporter heptosyltransferase Aah (391 aa).

The ADP-D-glycero-beta-D-manno-heptose site is built by Thr101, Leu102, and Gly103. Asp104 (proton acceptor) is an active-site residue. Positions 218, 220, 224, 251, 275, 296, and 320 each coordinate ADP-D-glycero-beta-D-manno-heptose. Residues Cys333, Cys336, Cys352, and Cys364 each contribute to the Fe(3+) site.

The protein belongs to the glycosyltransferase 9 family. In terms of assembly, homododecamer composed of 6 homodimers forming a ring. Fe(3+) is required as a cofactor.

The protein localises to the cytoplasm. It carries out the reaction ADP-D-glycero-beta-D-manno-heptose + L-seryl-[protein] = O-(D-glycero-alpha-D-manno-heptosyl)-L-seryl-[protein] + ADP + H(+). The catalysed reaction is ADP-L-glycero-beta-D-manno-heptose + L-seryl-[protein] = O-(L-glycero-alpha-D-manno-heptosyl)-L-seryl-[protein] + ADP + H(+). Its function is as follows. Glycosylates autotransporter AIDA-I. Catalyzes the addition of both L, D-heptose and D, D-heptose sugars. Probably by glycosylating AIDA-I, involved in bacteria adhesion to host mammalian cells. In Escherichia coli, this protein is Autotransporter heptosyltransferase Aah.